Reading from the N-terminus, the 1155-residue chain is DNA-directed RNA polymerase subunit beta (1155 aa).

This sequence belongs to the RNA polymerase beta chain family. As to quaternary structure, the RNAP catalytic core consists of 2 alpha, 1 beta, 1 beta' and 1 omega subunit. When a sigma factor is associated with the core the holoenzyme is formed, which can initiate transcription.

It catalyses the reaction RNA(n) + a ribonucleoside 5'-triphosphate = RNA(n+1) + diphosphate. Its function is as follows. DNA-dependent RNA polymerase catalyzes the transcription of DNA into RNA using the four ribonucleoside triphosphates as substrates. This Borrelia hermsii (strain HS1 / DAH) protein is DNA-directed RNA polymerase subunit beta.